A 458-amino-acid chain; its full sequence is Phosphoglucosamine mutase (458 aa).

The Phosphoserine intermediate role is filled by S108. S108, D247, D249, and D251 together coordinate Mg(2+). S108 is modified (phosphoserine).

The protein belongs to the phosphohexose mutase family. Mg(2+) serves as cofactor. Activated by phosphorylation.

It carries out the reaction alpha-D-glucosamine 1-phosphate = D-glucosamine 6-phosphate. Functionally, catalyzes the conversion of glucosamine-6-phosphate to glucosamine-1-phosphate. This is Phosphoglucosamine mutase from Nitrosomonas europaea (strain ATCC 19718 / CIP 103999 / KCTC 2705 / NBRC 14298).